The sequence spans 170 residues: Large ribosomal subunit protein uL15 (170 aa).

A compositionally biased stretch (basic and acidic residues) spans 1–12 (MKLHDLRPAEGS). Residues 1-50 (MKLHDLRPAEGSHRKRKRIGRGHGSGKVKTGGKGMMGQKARSGPGPYRTF) are disordered. Basic residues predominate over residues 13–26 (HRKRKRIGRGHGSG).

This sequence belongs to the universal ribosomal protein uL15 family. In terms of assembly, part of the 50S ribosomal subunit.

Functionally, binds to the 23S rRNA. The chain is Large ribosomal subunit protein uL15 from Chloroflexus aggregans (strain MD-66 / DSM 9485).